The primary structure comprises 447 residues: Tubulin beta chain (447 aa).

Positions 11, 69, 138, 142, 143, 144, 204, and 226 each coordinate GTP. Mg(2+) is bound at residue glutamate 69. The segment at 424–447 (QYQEASVSDAEEEYDEEAPLEGEE) is disordered. A compositionally biased stretch (acidic residues) spans 432–447 (DAEEEYDEEAPLEGEE).

It belongs to the tubulin family. As to quaternary structure, dimer of alpha and beta chains. A typical microtubule is a hollow water-filled tube with an outer diameter of 25 nm and an inner diameter of 15 nM. Alpha-beta heterodimers associate head-to-tail to form protofilaments running lengthwise along the microtubule wall with the beta-tubulin subunit facing the microtubule plus end conferring a structural polarity. Microtubules usually have 13 protofilaments but different protofilament numbers can be found in some organisms and specialized cells. Mg(2+) is required as a cofactor.

The protein resides in the cytoplasm. Its subcellular location is the cytoskeleton. Functionally, tubulin is the major constituent of microtubules, a cylinder consisting of laterally associated linear protofilaments composed of alpha- and beta-tubulin heterodimers. Microtubules grow by the addition of GTP-tubulin dimers to the microtubule end, where a stabilizing cap forms. Below the cap, tubulin dimers are in GDP-bound state, owing to GTPase activity of alpha-tubulin. The protein is Tubulin beta chain (TUB1) of Zymoseptoria tritici (Speckled leaf blotch fungus).